Consider the following 3013-residue polypeptide: Protein furry homolog-like (3013 aa).

S2 bears the N-acetylserine mark. Positions 90–109 (DESYEYRPRSSTKSKGDEQQ) are disordered. The residue at position 844 (S844) is a Phosphoserine. Disordered regions lie at residues 878 to 897 (SSST…LAST) and 1476 to 1498 (VTSG…PDNK). Low complexity predominate over residues 1476–1486 (VTSGTTSSSNT). 5 positions are modified to phosphoserine: S1914, S1935, S1941, S1945, and S1957. T1959 is modified (phosphothreonine). A phosphoserine mark is found at S1978, S2272, and S2454. The interval 2459 to 2492 (DKGDTPSLQEYQCSSSTPSLNLTNQEDTDESSEE) is disordered. A compositionally biased stretch (polar residues) spans 2464–2483 (PSLQEYQCSSSTPSLNLTNQ). Position 2499 is a phosphoserine (S2499). 2 disordered regions span residues 2508–2567 (LNSD…DTTS) and 2636–2660 (EEEA…EVQT). 2 stretches are compositionally biased toward polar residues: residues 2528-2539 (SEDSTGSITTEE) and 2555-2567 (DNAN…DTTS).

It belongs to the furry protein family. In terms of tissue distribution, widely expressed with higher expression in colon, placenta, brain and cells of lymphoid origin.

In terms of biological role, plays a key role in maintaining the integrity of polarized cell extensions during morphogenesis, regulates the actin cytoskeleton and plays a key role in patterning sensory neuron dendritic fields by promoting avoidance between homologous dendrites as well as by limiting dendritic branching. May function as a transcriptional activator. In Homo sapiens (Human), this protein is Protein furry homolog-like (FRYL).